The chain runs to 280 residues: Homeobox protein SMOX-1 (280 aa).

The interval 61–88 (PNNNSFQLNTTNDSNNNNTTNNGNDSRS) is disordered. Positions 69–85 (NTTNDSNNNNTTNNGND) are enriched in low complexity. The Antp-type hexapeptide motif lies at 214 to 219 (VYPWMN). The segment at residues 229–280 (QKRTRQTYTRYQTLELEKEFHFNKYLTRRRRIEIAHTLTLTERQIKIWFQNR) is a DNA-binding region (homeobox).

Belongs to the Antp homeobox family.

The protein resides in the nucleus. This chain is Homeobox protein SMOX-1 (SMOX-1), found in Schistosoma mansoni (Blood fluke).